The following is a 140-amino-acid chain: Lipoprotein MlpD (140 aa).

Positions 1–17 are cleaved as a signal peptide; the sequence is MKIINILFCLFLLMLNG. Cys-18 is lipidated: N-palmitoyl cysteine. A lipid anchor (S-diacylglycerol cysteine) is attached at Cys-18. Residues 22 to 53 are disordered; that stretch reads DTNNSQTKSRQKRDLTQKEATQEKPKSKEELL. Over residues 33–53 the composition is skewed to basic and acidic residues; the sequence is KRDLTQKEATQEKPKSKEELL.

Belongs to the Multicopy lipoprotein (Mlp) family.

The protein resides in the cell outer membrane. An outer membrane protein that may participate in pathogenesis. Some human Lyme disease patients have antibodies against this protein. The Mlp proteins probably undergo intragenic recombination, generating new alleles. This Borreliella burgdorferi (strain ATCC 35210 / DSM 4680 / CIP 102532 / B31) (Borrelia burgdorferi) protein is Lipoprotein MlpD.